The following is a 368-amino-acid chain: Ferrochelatase (368 aa).

The Fe cation site is built by H209 and E290. The disordered stretch occupies residues 347-368 (REEQEQQAHISREEARRLGADQ).

It belongs to the ferrochelatase family.

The protein localises to the cytoplasm. The enzyme catalyses heme b + 2 H(+) = protoporphyrin IX + Fe(2+). It functions in the pathway porphyrin-containing compound metabolism; protoheme biosynthesis; protoheme from protoporphyrin-IX: step 1/1. Catalyzes the ferrous insertion into protoporphyrin IX. This is Ferrochelatase from Janthinobacterium sp. (strain Marseille) (Minibacterium massiliensis).